The primary structure comprises 1919 residues: Protein TIC 214 (1919 aa).

6 helical membrane-spanning segments follow: residues 18–38 (IINS…FSIG), 67–87 (FITG…HLAL), 90–110 (PHTI…WNNH), 127–147 (LSIQ…HFIL), 175–195 (VGWL…LVWI), and 224–244 (IFSI…PSPI). Disordered stretches follow at residues 250–375 (KETP…GKEK), 1107–1129 (IKSI…NKRS), and 1606–1636 (ELKN…RRFV). Acidic residues-rich tracts occupy residues 259 to 269 (GESEEETDVEI), 278 to 288 (GESEEETDVEI), 297 to 307 (GESEEETDVEI), 316 to 328 (GESE…EIET), and 355 to 366 (EKEDPDKIDETE). A compositionally biased stretch (basic residues) spans 1107-1117 (IKSITKEKKKG). A compositionally biased stretch (basic and acidic residues) spans 1606 to 1623 (ELKNRNQEEKEPADRGDL). The span at 1626–1636 (DAQNQGNRRFV) shows a compositional bias: polar residues.

Belongs to the TIC214 family. Part of the Tic complex.

It localises to the plastid. The protein localises to the chloroplast inner membrane. Involved in protein precursor import into chloroplasts. May be part of an intermediate translocation complex acting as a protein-conducting channel at the inner envelope. This is Protein TIC 214 from Panax ginseng (Korean ginseng).